Here is a 191-residue protein sequence, read N- to C-terminus: Fe/S biogenesis protein NfuA (191 aa).

Residues C149 and C152 each contribute to the [4Fe-4S] cluster site.

Belongs to the NfuA family. As to quaternary structure, homodimer. [4Fe-4S] cluster is required as a cofactor.

Its function is as follows. Involved in iron-sulfur cluster biogenesis. Binds a 4Fe-4S cluster, can transfer this cluster to apoproteins, and thereby intervenes in the maturation of Fe/S proteins. Could also act as a scaffold/chaperone for damaged Fe/S proteins. The protein is Fe/S biogenesis protein NfuA of Pseudoalteromonas translucida (strain TAC 125).